The chain runs to 237 residues: Putative anti-FlhC(2)FlhD(4) factor YdiV (237 aa).

The EAL domain maps to 1 to 237 (MKIFLENLYH…INQITTLVQR (237 aa)).

Belongs to the YdiV family.

Its function is as follows. Upon overexpression acts as a novel anti-FlhC(2)FlhD(4) factor, decreasing its DNA-binding activity, able to negatively regulate expression of flagellar class II operons including FliC. This Escherichia coli (strain K12) protein is Putative anti-FlhC(2)FlhD(4) factor YdiV (ydiV).